The chain runs to 659 residues: Siderophore transporter fer7 (659 aa).

A disordered region spans residues 1 to 62; it reads MSNQAQDQPE…ADASSAREGQ (62 aa). Polar residues predominate over residues 31-41; that stretch reads QSVSAHGNTSL. The N-linked (GlcNAc...) asparagine glycan is linked to Asn38. A compositionally biased stretch (basic and acidic residues) spans 42-54; that stretch reads NKKDRVSAVRDAD. 8 helical membrane passes run 79-99, 121-141, 150-170, 208-228, 245-265, 316-336, 348-368, and 379-399; these read NSPIVYTVYASLAAVTICFAL, LFGVIATVEAILNAVSKPFIA, QTAYFLVAVFYTIGFVVVASA, GVVTALTSSPFIVLPWVGNLI, GMFAIMAPVCVAPIILVLMYV, LVGLFLLALSFSLLLVPFSIY, IIAMFVCGGVILGMFLAWEIL, and VWYNRTFLLAVTIDIFYFMGG. Asn415 carries an N-linked (GlcNAc...) asparagine glycan. 2 helical membrane passes run 424 to 444 and 451 to 471; these read VVNALATCALSVFGLAAGFYL and KFLQIGGLVIRIVAMGLYLYG. N-linked (GlcNAc...) asparagine glycosylation occurs at Asn475. 3 helical membrane passes run 478-498, 528-548, and 590-610; these read TMVVAWSQILNSLGGACSVVG, AIGSAIAAGIWTGTLPDYLAA, and PIFIVALVLAFIPLFAGLLMP.

Belongs to the major facilitator superfamily.

It localises to the membrane. Siderophore transporter; part of the gene cluster that mediates the biosynthesis of siderophore ferrichrome A which is contributing to organismal virulence. The protein is Siderophore transporter fer7 of Mycosarcoma maydis (Corn smut fungus).